We begin with the raw amino-acid sequence, 76 residues long: Translational regulator CsrA (76 aa).

This sequence belongs to the CsrA/RsmA family. In terms of assembly, homodimer; the beta-strands of each monomer intercalate to form a hydrophobic core, while the alpha-helices form wings that extend away from the core.

It is found in the cytoplasm. In terms of biological role, a translational regulator that binds mRNA to regulate translation initiation and/or mRNA stability. Usually binds in the 5'-UTR at or near the Shine-Dalgarno sequence preventing ribosome-binding, thus repressing translation. Its main target seems to be the major flagellin gene, while its function is anatagonized by FliW. This is Translational regulator CsrA from Syntrophomonas wolfei subsp. wolfei (strain DSM 2245B / Goettingen).